The chain runs to 383 residues: Lipid-A-disaccharide synthase (383 aa).

It belongs to the LpxB family.

It carries out the reaction 2-N,3-O-bis[(3R)-3-hydroxytetradecanoyl]-alpha-D-glucosaminyl 1-phosphate + UDP-2-N,3-O-bis[(3R)-3-hydroxytetradecanoyl]-alpha-D-glucosamine = lipid A disaccharide (E. coli) + UDP + H(+). The catalysed reaction is a lipid X + a UDP-2-N,3-O-bis[(3R)-3-hydroxyacyl]-alpha-D-glucosamine = a lipid A disaccharide + UDP + H(+). Its pathway is glycolipid biosynthesis; lipid IV(A) biosynthesis; lipid IV(A) from (3R)-3-hydroxytetradecanoyl-[acyl-carrier-protein] and UDP-N-acetyl-alpha-D-glucosamine: step 5/6. Its function is as follows. Condensation of UDP-2,3-diacylglucosamine and 2,3-diacylglucosamine-1-phosphate to form lipid A disaccharide, a precursor of lipid A, a phosphorylated glycolipid that anchors the lipopolysaccharide to the outer membrane of the cell. This is Lipid-A-disaccharide synthase from Klebsiella pneumoniae subsp. pneumoniae (strain ATCC 700721 / MGH 78578).